Here is a 251-residue protein sequence, read N- to C-terminus: Large ribosomal subunit protein uL4 (251 aa).

The protein belongs to the universal ribosomal protein uL4 family. In terms of assembly, part of the 50S ribosomal subunit.

Its function is as follows. One of the primary rRNA binding proteins, this protein initially binds near the 5'-end of the 23S rRNA. It is important during the early stages of 50S assembly. It makes multiple contacts with different domains of the 23S rRNA in the assembled 50S subunit and ribosome. Functionally, forms part of the polypeptide exit tunnel. The chain is Large ribosomal subunit protein uL4 from Methanothrix thermoacetophila (strain DSM 6194 / JCM 14653 / NBRC 101360 / PT) (Methanosaeta thermophila).